A 120-amino-acid chain; its full sequence is U13-lycotoxin-Ls1f (120 aa).

The N-terminal stretch at M1–S19 is a signal peptide. Positions E20–R54 are excised as a propeptide. Cystine bridges form between C56–C70, C63–C76, C69–C87, and C78–C85. Residues C56–C95 form the Agouti domain.

Belongs to the neurotoxin 05 (agouti) family. In terms of processing, contains 6 disulfide bonds. Expressed by the venom gland.

It localises to the secreted. This chain is U13-lycotoxin-Ls1f, found in Lycosa singoriensis (Wolf spider).